Here is a 323-residue protein sequence, read N- to C-terminus: Prostaglandin-E(2) 9-reductase (323 aa).

NADP(+) is bound by residues 23–24 (TY) and Asp-50. Residue Tyr-24 participates in substrate binding. Catalysis depends on Tyr-55, which acts as the Proton donor. His-117 is a binding site for substrate. NADP(+) contacts are provided by residues 166–167 (SN), Gln-190, 216–221 (YSALGS), and 270–280 (KSFTEKRIKEN).

This sequence belongs to the aldo/keto reductase family.

It localises to the cytoplasm. It carries out the reaction prostaglandin F2alpha + NADP(+) = prostaglandin E2 + NADPH + H(+). It catalyses the reaction (17R,20S)-17,20-dihydroxypregn-4-en-3-one + NADP(+) = 17alpha-hydroxyprogesterone + NADPH + H(+). The catalysed reaction is (17R,20S)-17,20-dihydroxypregn-4-en-3-one + NAD(+) = 17alpha-hydroxyprogesterone + NADH + H(+). In terms of biological role, can convert prostaglandin E2 to prostaglandin F2-alpha. This chain is Prostaglandin-E(2) 9-reductase (AKR1C5), found in Oryctolagus cuniculus (Rabbit).